Consider the following 111-residue polypeptide: Ribonuclease P protein component (111 aa).

It belongs to the RnpA family. In terms of assembly, consists of a catalytic RNA component (M1 or rnpB) and a protein subunit.

The enzyme catalyses Endonucleolytic cleavage of RNA, removing 5'-extranucleotides from tRNA precursor.. Functionally, RNaseP catalyzes the removal of the 5'-leader sequence from pre-tRNA to produce the mature 5'-terminus. It can also cleave other RNA substrates such as 4.5S RNA. The protein component plays an auxiliary but essential role in vivo by binding to the 5'-leader sequence and broadening the substrate specificity of the ribozyme. The sequence is that of Ribonuclease P protein component from Borrelia garinii subsp. bavariensis (strain ATCC BAA-2496 / DSM 23469 / PBi) (Borreliella bavariensis).